A 387-amino-acid chain; its full sequence is Patatin-03 (387 aa).

An N-terminal signal peptide occupies residues 1-23 (MATTKSVLVLIFMILATTSSTFA). One can recognise a PNPLA domain in the interval 32-230 (LSIDGGGIKG…TVADPALLSV (199 aa)). The GXGXXG motif lies at 36 to 41 (GGGIKG). The short motif at 75 to 79 (GTSTG) is the GXSXG element. The Nucleophile role is filled by S77. Residues N115 and N203 are each glycosylated (N-linked (GlcNAc...) asparagine). D216 functions as the Proton acceptor in the catalytic mechanism. The short motif at 216 to 218 (DGA) is the DGA/G element.

The protein belongs to the patatin family. In terms of tissue distribution, tuber.

The protein resides in the vacuole. Its function is as follows. Probable lipolytic acyl hydrolase (LAH), an activity which is thought to be involved in the response of tubers to pathogens. This Solanum tuberosum (Potato) protein is Patatin-03.